An 846-amino-acid chain; its full sequence is Disrupted in schizophrenia 1 homolog (846 aa).

Disordered stretches follow at residues 1–53 (MQGA…IGFL), 127–147 (HSGVHSGNDRRQSERLTGDSG), 231–257 (EAEPLHQSPQEMAAEGSGSDRPHGEPR), 277–312 (TRSNRQPECGMVSSSDAGFSSQDASPAGGRSDQDGG), and 409–436 (LHGAPQRAGSDDPEAPLEGQRRTTAQDS). Residues 1–288 (MQGAGSRGAW…SNRQPECGMV (288 aa)) are interaction with MAP1A. 2 stretches are compositionally biased toward basic and acidic residues: residues 133 to 143 (GNDRRQSERLT) and 248 to 257 (GSDRPHGEPR). Residues 277–300 (TRSNRQPECGMVSSSDAGFSSQDA) show a composition bias toward polar residues. The interval 289-686 (SSSDAGFSSQ…LERVWKADLE (398 aa)) is interaction with TRAF3IP1. Residues 429–587 (RRTTAQDSLP…LLEAKMLALS (159 aa)) are required for localization to punctate cytoplasmic foci. The interval 435–846 (DSLPGLAVTR…STAGAQEAED (412 aa)) is necessary and sufficient for interaction with PCNT and localization at the centrosome. The stretch at 440-489 (LAVTRRDWLMREKEQLQKEIEALRARVSVLEAKEQRLSQELEDQEMLLRW) forms a coiled coil. The interaction with ATF4 and ATF5 stretch occupies residues 588–846 (GSCFSTAKEL…STAGAQEAED (259 aa)). The segment at 721–846 (TAALAVPRTP…STAGAQEAED (126 aa)) is interaction with NDEL1 and PAFAH1B1. Residues 721–846 (TAALAVPRTP…STAGAQEAED (126 aa)) are interaction with PAFAH1B1. The segment at 795 to 828 (GHDEALFQSLQGELQMVKETLQTMFLQLQPAKEA) is interaction with NDEL1.

As to quaternary structure, interacts with NDEL1. Interacts with CCDC88A (via C-terminus); the interaction is direct. Interacts with GSK3B. Interacts with tubulin alpha, ACTN2, ANKHD1, ATF4, ATF5, CEP63, EIF3S3, MAP1A, NDEL1, PAFAH1B1, RANBP9, SPTBN4, SYNE1 and TRAF3IP1. Interaction with microtubules may be mediated in part by TRAF3IP1. Interacts (via C-terminal) with PCNT. Interacts with CHCHD6. Interacts with CCDC141. Interacts with FBXW7, the substrate-recognition component of a SCF (SKP1-CUL1-F-box protein) E3 ubiquitin-protein ligase complex; the interaction targets DISC1 for proteasomal degradation. Interacts with ZNF365. Interacts with ATF4; inhibiting ATF4 transcription factor activity by disrupting ATF4 dimerization and DNA-binding. Interacts with PDE4B. Post-translationally, ubiquitinated. Ubiquitination with 'Lys-48'-linked polyubiquitin chains leads to its proteasomal degradation. In terms of tissue distribution, expressed in brain, heart, kidney, liver and thymus. Within the brain expression is high in the cerebral cortex, hippocampus and olfactory bulb and is also seen at lower levels in the cerebellum (at protein level).

It is found in the cytoplasm. Its subcellular location is the cytoskeleton. The protein resides in the mitochondrion. It localises to the microtubule organizing center. The protein localises to the centrosome. It is found in the postsynaptic density. In terms of biological role, involved in the regulation of multiple aspects of embryonic and adult neurogenesis. Required for neural progenitor proliferation in the ventrical/subventrical zone during embryonic brain development and in the adult dentate gyrus of the hippocampus. Participates in the Wnt-mediated neural progenitor proliferation as a positive regulator by modulating GSK3B activity and CTNNB1 abundance. Plays a role as a modulator of the AKT-mTOR signaling pathway controlling the tempo of the process of newborn neurons integration during adult neurogenesis, including neuron positioning, dendritic development and synapse formation. Inhibits the activation of AKT-mTOR signaling upon interaction with CCDC88A. Regulates the migration of early-born granule cell precursors toward the dentate gyrus during the hippocampal development. Inhibits ATF4 transcription factor activity in neurons by disrupting ATF4 dimerization and DNA-binding. Plays a role, together with PCNT, in the microtubule network formation. In Rattus norvegicus (Rat), this protein is Disrupted in schizophrenia 1 homolog.